The chain runs to 260 residues: Malonyl-[acyl-carrier protein] O-methyltransferase (260 aa).

Belongs to the methyltransferase superfamily.

The catalysed reaction is malonyl-[ACP] + S-adenosyl-L-methionine = malonyl-[ACP] methyl ester + S-adenosyl-L-homocysteine. Its pathway is cofactor biosynthesis; biotin biosynthesis. In terms of biological role, converts the free carboxyl group of a malonyl-thioester to its methyl ester by transfer of a methyl group from S-adenosyl-L-methionine (SAM). It allows to synthesize pimeloyl-ACP via the fatty acid synthetic pathway. This chain is Malonyl-[acyl-carrier protein] O-methyltransferase, found in Chlorobium phaeovibrioides (strain DSM 265 / 1930) (Prosthecochloris vibrioformis (strain DSM 265)).